We begin with the raw amino-acid sequence, 232 residues long: Membrane steroid-binding protein 1 (232 aa).

Residues 25-45 (AAFFTAVAAAAALYHVVSGIF) form a helical membrane-spanning segment. Disordered stretches follow at residues 48–77 (PPPPPPPRPRDEPEAEPLPPPVQLGEVSEE) and 172–232 (TVPV…AKES). Residues 71–170 (LGEVSEEELR…GKYVKVGTVK (100 aa)) form the Cytochrome b5 heme-binding domain. The interval 73–170 (EVSEEELRQY…GKYVKVGTVK (98 aa)) is steroid-binding. A compositionally biased stretch (low complexity) spans 179–193 (APSTSPETTETAAAA). Residues 194–219 (EPEKAPATEEKPREVSSEEVKEKEDA) are compositionally biased toward basic and acidic residues.

It belongs to the cytochrome b5 family. MAPR subfamily. In terms of assembly, interacts with SERL2. As to expression, expressed in leaf sheaths, leaf blades and panicles.

The protein resides in the cell membrane. Its function is as follows. Binds multiple steroid compounds. May act as a coreceptor with SERL2 and enhance its endocytosis. The protein is Membrane steroid-binding protein 1 of Oryza sativa subsp. japonica (Rice).